An 89-amino-acid polypeptide reads, in one-letter code: Small ribosomal subunit protein uS17 (89 aa).

Belongs to the universal ribosomal protein uS17 family. In terms of assembly, part of the 30S ribosomal subunit.

One of the primary rRNA binding proteins, it binds specifically to the 5'-end of 16S ribosomal RNA. The sequence is that of Small ribosomal subunit protein uS17 from Xanthomonas campestris pv. campestris (strain B100).